The chain runs to 618 residues: Membrane protein insertase YidC (618 aa).

The next 6 membrane-spanning stretches (helical) occupy residues Lys-3 to Ser-23, Trp-363 to Phe-383, Leu-439 to Ile-459, Phe-478 to Leu-498, Pro-520 to Leu-540, and Ser-545 to Leu-565.

It belongs to the OXA1/ALB3/YidC family. Type 1 subfamily. As to quaternary structure, interacts with the Sec translocase complex via SecD. Specifically interacts with transmembrane segments of nascent integral membrane proteins during membrane integration.

The protein resides in the cell membrane. Required for the insertion and/or proper folding and/or complex formation of integral membrane proteins into the membrane. Involved in integration of membrane proteins that insert both dependently and independently of the Sec translocase complex, as well as at least some lipoproteins. Aids folding of multispanning membrane proteins. The protein is Membrane protein insertase YidC of Bacteroides fragilis (strain YCH46).